Reading from the N-terminus, the 153-residue chain is Endoribonuclease YbeY (153 aa).

Positions 118, 122, and 128 each coordinate Zn(2+).

The protein belongs to the endoribonuclease YbeY family. Zn(2+) is required as a cofactor.

The protein localises to the cytoplasm. Functionally, single strand-specific metallo-endoribonuclease involved in late-stage 70S ribosome quality control and in maturation of the 3' terminus of the 16S rRNA. The sequence is that of Endoribonuclease YbeY from Pelagibacter ubique (strain HTCC1062).